Reading from the N-terminus, the 1464-residue chain is MGARGSVLSGKKTDELEKVRLRPGGKKRYMLKHIVWAVNELERFGLAESRLGSKEGCRKIRKVLGPLVPTGSENLKSLYNTVCVIFCLHAEEKVKDTEEAKKIAQRHLAADTEKMPAMSKPSKPTSRLAYPVQQIAGNYSHLPLSPRTLNAWVKLVEEKKFGAEVVPGFQALSEGCTPYDINQMLNCVGEHQAAMQIIREIINEEAADWDQQHPSPGPMPAGQLREPRGSDIAGTTSTVEEQIQWMYRPQNPVPVGNIYRRWIQLGLQKCVRMYNPTNILDIKQGPKEPFQSYVDRFYKSLRAEQTDPAVKNWMTQTLLIQNANPDCKLVLKGLGMNPTLEEMLTACQGIGGPGQKARLMAEALKEALTPSTNPFAAAQPRAGKRTVTCWNCGKAGHTARQCKAPRRQGCWKCGQQGHIMSKCPERQAGFLRVRPLGKEASQFPRPGTPGDSAICAPDEPSIRHDTSGCDSICTPCRSSRGDAKELHATREEAEGEQRETLQGGDRGFAAPQFSLWRRPVVKATIEGQSVEVLLDTGADDSIVAGIELGSNYTPKIVGGIGGFINTNEYKNVEIEVVGKRVRATVMTGDTPINIFGRNILNSLGMTLNFPVARIEPVKVQLKPEKDGPKIRQWPLSKEKILALKEICEKMEKEGQLEEAPPTNPYNSPTFAIKKKDKNKWRMLIDFRELNKVTQEFTEVQLGIPHPAGLASKKRITVLDVGDAYFSVPLDPDFRQYTAFTLPAVNNAEPGKRYLYKVLPQGWKGSPAIFQYTMAKVLDPFRKANNDVTIIQYMDDILVASDRSDLEHDRVVSQLKELLNNMGFSTPEEKFQKDPPFKWMGYELWPKKWKLQKIQLPEKEVWTVNDIQKLVGVLNWAAQLFPGIKTRHICKLIRGKMTLTEEVQWTELAEAEFQENKIILEQEQEGSYYKEGVPLEATVQKNLANQWTYKIHQGDKILKVGKYAKVKNTHTNGVRLLAHVVQKIGKEALVIWGEIPMFHLPVERETWDQWWTDYWQVTWIPEWDFVSTPPLIRLAYNLVKDPLEGVETYYTDGSCNKASKEGKAGYVTDRGKDKVKPLEQTTNQQAELEAFALALQDSGPQVNIIVDSQYVMGIVAAQPTETESPIVREIIEEMIKKEKIYVGWVPAHKGLGGNQEVDHLVSQGIRQILFLEKIEPAQEEHEKYHNNVKELVHKFGIPQLVARQIVNSCDKCQQKGEAIHGQVNSELGTWQMDCTHLEGKVIIVAVHVASGFIEAEVIPQETGRQTALFLLKLASRWPITHLHTDNGANFTSQDVKMAAWWIGIEQTFGVPYNPESQGVVEAMNHHLKNQIDRIRDQAVSIETVVLMATHCMNFKRRGGIGDMTPAERIVNMITTEQEIQFLQTKNLKFQNFRVYYREGRDQLWKGPGDLLWKGEGAVIIKVGTEIKVIPRRKAKIIRNYGGGKELDCSADVEDTMQAREVAQSN.

Gly-2 is lipidated: N-myristoyl glycine; by host. The segment at 7 to 31 (VLSGKKTDELEKVRLRPGGKKRYML) is interaction with Gp41. A Nuclear export signal motif is present at residues 16 to 22 (LEKVRLR). The short motif at 26 to 32 (KKRYMLK) is the Nuclear localization signal element. Tyr-130 carries the post-translational modification Phosphotyrosine; by host. Residues 186–223 (NCVGEHQAAMQIIREIINEEAADWDQQHPSPGPMPAGQ) form an interaction with human PPIA/CYPA and NUP153 region. The interval 274-360 (YNPTNILDIK…GGPGQKARLM (87 aa)) is dimerization/Multimerization of capsid protein p24. 2 CCHC-type zinc fingers span residues 387-404 (VTCW…QCKA) and 408-425 (QGCW…KCPE). The span at 483–499 (AKELHATREEAEGEQRE) shows a compositional bias: basic and acidic residues. The interval 483–504 (AKELHATREEAEGEQRETLQGG) is disordered. A dimerization of protease region spans residues 511–515 (PQFSL). One can recognise a Peptidase A2 domain in the interval 531–600 (EVLLDTGADD…PINIFGRNIL (70 aa)). Asp-535 (for protease activity; shared with dimeric partner) is an active-site residue. Dimerization of protease regions lie at residues 559–565 (GIGGFIN) and 598–610 (NILN…LNFP). In terms of domain architecture, Reverse transcriptase spans 654–844 (GQLEEAPPTN…PFKWMGYELW (191 aa)). Residues Asp-719, Asp-794, and Asp-795 each contribute to the Mg(2+) site. Residues 836 to 844 (FKWMGYELW) are RT 'primer grip'. The Tryptophan repeat motif signature appears at 1006 to 1022 (WDQWWTDYWQVTWIPEW). The RNase H type-1 domain occupies 1042 to 1165 (LEGVETYYTD…VDHLVSQGIR (124 aa)). Mg(2+)-binding residues include Asp-1051, Glu-1086, Asp-1106, and Asp-1157. Residues 1171–1212 (EKIEPAQEEHEKYHNNVKELVHKFGIPQLVARQIVNSCDKCQ) form an Integrase-type zinc finger. The Zn(2+) site is built by His-1180, His-1184, Cys-1208, and Cys-1211. Residues 1222–1373 (VNSELGTWQM…PAERIVNMIT (152 aa)) form the Integrase catalytic domain. Positions 1232, 1284, and 1320 each coordinate Mg(2+). The integrase-type DNA-binding region spans 1391–1438 (FRVYYREGRDQLWKGPGDLLWKGEGAVIIKVGTEIKVIPRRKAKIIRN).

As to quaternary structure, homotrimer; further assembles as hexamers of trimers. Interacts with gp41 (via C-terminus). Interacts with host CALM1; this interaction induces a conformational change in the Matrix protein, triggering exposure of the myristate group. Interacts with host AP3D1; this interaction allows the polyprotein trafficking to multivesicular bodies during virus assembly. Part of the pre-integration complex (PIC) which is composed of viral genome, matrix protein, Vpr and integrase. Homodimer; the homodimer further multimerizes as homohexamers or homopentamers. Interacts with human PPIA/CYPA. Interacts with human NUP153. Interacts with host PDZD8; this interaction stabilizes the capsid. Interacts with monkey TRIM5; this interaction destabilizes the capsid. In terms of assembly, homodimer, whose active site consists of two apposed aspartic acid residues. As to quaternary structure, heterodimer of p66 RT and p51 RT (RT p66/p51). Heterodimerization of RT is essential for DNA polymerase activity. The overall folding of the subdomains is similar in p66 RT and p51 RT but the spatial arrangements of the subdomains are dramatically different. Homotetramer; may further associate as a homohexadecamer. Part of the pre-integration complex (PIC) which is composed of viral genome, matrix protein, Vpr and integrase. Interacts with human SMARCB1/INI1 and human PSIP1/LEDGF isoform 1. Interacts with human KPNA3; this interaction might play a role in nuclear import of the pre-integration complex. Interacts with human NUP153; this interaction might play a role in nuclear import of the pre-integration complex. The cofactor is Mg(2+). Specific enzymatic cleavages by the viral protease yield mature proteins. The protease is released by autocatalytic cleavage. The polyprotein is cleaved during and after budding, this process is termed maturation. Proteolytic cleavage of p66 RT removes the RNase H domain to yield the p51 RT subunit. Nucleocapsid protein p7 might be further cleaved after virus entry.

It is found in the host cell membrane. The protein resides in the host endosome. It localises to the host multivesicular body. The protein localises to the virion membrane. Its subcellular location is the host nucleus. It is found in the host cytoplasm. The protein resides in the virion. The catalysed reaction is Endopeptidase for which the P1 residue is preferably hydrophobic.. The enzyme catalyses Endohydrolysis of RNA in RNA/DNA hybrids. Three different cleavage modes: 1. sequence-specific internal cleavage of RNA. Human immunodeficiency virus type 1 and Moloney murine leukemia virus enzymes prefer to cleave the RNA strand one nucleotide away from the RNA-DNA junction. 2. RNA 5'-end directed cleavage 13-19 nucleotides from the RNA end. 3. DNA 3'-end directed cleavage 15-20 nucleotides away from the primer terminus.. It catalyses the reaction 3'-end directed exonucleolytic cleavage of viral RNA-DNA hybrid.. It carries out the reaction DNA(n) + a 2'-deoxyribonucleoside 5'-triphosphate = DNA(n+1) + diphosphate. Protease: The viral protease is inhibited by many synthetic protease inhibitors (PIs), such as amprenavir, atazanavir, indinavir, loprinavir, nelfinavir, ritonavir and saquinavir. Use of protease inhibitors in tritherapy regimens permit more ambitious therapeutic strategies. Reverse transcriptase/ribonuclease H: RT can be inhibited either by nucleoside RT inhibitors (NRTIs) or by non nucleoside RT inhibitors (NNRTIs). NRTIs act as chain terminators, whereas NNRTIs inhibit DNA polymerization by binding a small hydrophobic pocket near the RT active site and inducing an allosteric change in this region. Classical NRTIs are abacavir, adefovir (PMEA), didanosine (ddI), lamivudine (3TC), stavudine (d4T), tenofovir (PMPA), zalcitabine (ddC), and zidovudine (AZT). Classical NNRTIs are atevirdine (BHAP U-87201E), delavirdine, efavirenz (DMP-266), emivirine (I-EBU), and nevirapine (BI-RG-587). The tritherapies used as a basic effective treatment of AIDS associate two NRTIs and one NNRTI. Its function is as follows. Mediates, with Gag polyprotein, the essential events in virion assembly, including binding the plasma membrane, making the protein-protein interactions necessary to create spherical particles, recruiting the viral Env proteins, and packaging the genomic RNA via direct interactions with the RNA packaging sequence (Psi). Gag-Pol polyprotein may regulate its own translation, by the binding genomic RNA in the 5'-UTR. At low concentration, the polyprotein would promote translation, whereas at high concentration, the polyprotein would encapsidate genomic RNA and then shut off translation. In terms of biological role, targets the polyprotein to the plasma membrane via a multipartite membrane-binding signal, that includes its myristoylated N-terminus. Matrix protein is part of the pre-integration complex. Implicated in the release from host cell mediated by Vpu. Binds to RNA. Functionally, forms the conical core that encapsulates the genomic RNA-nucleocapsid complex in the virion. Most core are conical, with only 7% tubular. The core is constituted by capsid protein hexamer subunits. The core is disassembled soon after virion entry. Host restriction factors such as TRIM5-alpha or TRIMCyp bind retroviral capsids and cause premature capsid disassembly, leading to blocks in reverse transcription. Capsid restriction by TRIM5 is one of the factors which restricts HIV-1 to the human species. Host PIN1 apparently facilitates the virion uncoating. On the other hand, interactions with PDZD8 or CYPA stabilize the capsid. Encapsulates and protects viral dimeric unspliced genomic RNA (gRNA). Binds these RNAs through its zinc fingers. Acts as a nucleic acid chaperone which is involved in rearangement of nucleic acid secondary structure during gRNA retrotranscription. Also facilitates template switch leading to recombination. As part of the polyprotein, participates in gRNA dimerization, packaging, tRNA incorporation and virion assembly. Its function is as follows. Aspartyl protease that mediates proteolytic cleavages of Gag and Gag-Pol polyproteins during or shortly after the release of the virion from the plasma membrane. Cleavages take place as an ordered, step-wise cascade to yield mature proteins. This process is called maturation. Displays maximal activity during the budding process just prior to particle release from the cell. Also cleaves Nef and Vif, probably concomitantly with viral structural proteins on maturation of virus particles. Hydrolyzes host EIF4GI and PABP1 in order to shut off the capped cellular mRNA translation. The resulting inhibition of cellular protein synthesis serves to ensure maximal viral gene expression and to evade host immune response. In terms of biological role, multifunctional enzyme that converts the viral RNA genome into dsDNA in the cytoplasm, shortly after virus entry into the cell. This enzyme displays a DNA polymerase activity that can copy either DNA or RNA templates, and a ribonuclease H (RNase H) activity that cleaves the RNA strand of RNA-DNA heteroduplexes in a partially processive 3' to 5' endonucleasic mode. Conversion of viral genomic RNA into dsDNA requires many steps. A tRNA(3)-Lys binds to the primer-binding site (PBS) situated at the 5'-end of the viral RNA. RT uses the 3' end of the tRNA primer to perform a short round of RNA-dependent minus-strand DNA synthesis. The reading proceeds through the U5 region and ends after the repeated (R) region which is present at both ends of viral RNA. The portion of the RNA-DNA heteroduplex is digested by the RNase H, resulting in a ssDNA product attached to the tRNA primer. This ssDNA/tRNA hybridizes with the identical R region situated at the 3' end of viral RNA. This template exchange, known as minus-strand DNA strong stop transfer, can be either intra- or intermolecular. RT uses the 3' end of this newly synthesized short ssDNA to perform the RNA-dependent minus-strand DNA synthesis of the whole template. RNase H digests the RNA template except for two polypurine tracts (PPTs) situated at the 5'-end and near the center of the genome. It is not clear if both polymerase and RNase H activities are simultaneous. RNase H probably can proceed both in a polymerase-dependent (RNA cut into small fragments by the same RT performing DNA synthesis) and a polymerase-independent mode (cleavage of remaining RNA fragments by free RTs). Secondly, RT performs DNA-directed plus-strand DNA synthesis using the PPTs that have not been removed by RNase H as primers. PPTs and tRNA primers are then removed by RNase H. The 3' and 5' ssDNA PBS regions hybridize to form a circular dsDNA intermediate. Strand displacement synthesis by RT to the PBS and PPT ends produces a blunt ended, linear dsDNA copy of the viral genome that includes long terminal repeats (LTRs) at both ends. Functionally, catalyzes viral DNA integration into the host chromosome, by performing a series of DNA cutting and joining reactions. This enzyme activity takes place after virion entry into a cell and reverse transcription of the RNA genome in dsDNA. The first step in the integration process is 3' processing. This step requires a complex comprising the viral genome, matrix protein, Vpr and integrase. This complex is called the pre-integration complex (PIC). The integrase protein removes 2 nucleotides from each 3' end of the viral DNA, leaving recessed CA OH's at the 3' ends. In the second step, the PIC enters cell nucleus. This process is mediated through integrase and Vpr proteins, and allows the virus to infect a non dividing cell. This ability to enter the nucleus is specific of lentiviruses, other retroviruses cannot and rely on cell division to access cell chromosomes. In the third step, termed strand transfer, the integrase protein joins the previously processed 3' ends to the 5' ends of strands of target cellular DNA at the site of integration. The 5'-ends are produced by integrase-catalyzed staggered cuts, 5 bp apart. A Y-shaped, gapped, recombination intermediate results, with the 5'-ends of the viral DNA strands and the 3' ends of target DNA strands remaining unjoined, flanking a gap of 5 bp. The last step is viral DNA integration into host chromosome. This involves host DNA repair synthesis in which the 5 bp gaps between the unjoined strands are filled in and then ligated. Since this process occurs at both cuts flanking the HIV genome, a 5 bp duplication of host DNA is produced at the ends of HIV-1 integration. Alternatively, Integrase may catalyze the excision of viral DNA just after strand transfer, this is termed disintegration. The sequence is that of Gag-Pol polyprotein (gag-pol) from Human immunodeficiency virus type 2 subtype B (isolate EHO) (HIV-2).